Consider the following 286-residue polypeptide: Flagellar filament 33 kDa core protein (286 aa).

The protein belongs to the bacterial flagellin family. The flagellum consists of an outer layer composed of repeating units of FlaA around a core that contains several antigenically related polypeptides.

The protein localises to the periplasmic flagellum. It is found in the periplasm. In terms of biological role, component of the core of the flagella. The chain is Flagellar filament 33 kDa core protein from Treponema phagedenis.